A 518-amino-acid chain; its full sequence is Probable high-affinity hexose transporter ght7 (518 aa).

The Cytoplasmic portion of the chain corresponds to 1–27 (MRDFQSRFADRYNQITNSYSYSSSRQG). Residues 28–48 (LITGMVNVGSFFGCLLSSPVA) form a helical membrane-spanning segment. Topologically, residues 49–54 (DKIGKR) are extracellular. Residues 55–75 (LSIIVWTTVYLIGIIIQVTTV) traverse the membrane as a helical segment. Residues 76-77 (PS) are Cytoplasmic-facing. The helical transmembrane segment at 78–98 (WVQILVAKIWTGLSIGALSVI) threads the bilayer. Topologically, residues 99 to 112 (TPGYQSEVAPAIMR) are extracellular. A helical transmembrane segment spans residues 113 to 133 (GAIVTTYQLFITLGIFIAACI). The Cytoplasmic segment spans residues 134 to 149 (NMGTHKYSHGTTAQWR). Residues 150-170 (ISIGINLLWGIITLVGIIFLP) traverse the membrane as a helical segment. The Extracellular segment spans residues 171 to 236 (ESPRYLIAIG…IFNANIRYRT (66 aa)). A helical transmembrane segment spans residues 237-257 (FLGMAVMMFQQLTGANYYFYY). Topologically, residues 258 to 271 (GTQVFRGTGMDSPY) are cytoplasmic. The chain crosses the membrane as a helical span at residues 272–292 (LAALIPDAVNCGCTFGAIFVL). Over 293-298 (EFFGRR) the chain is Extracellular. Residues 299 to 319 (SPLIVGGIWQYICFFIYAAVG) form a helical membrane-spanning segment. The Cytoplasmic portion of the chain corresponds to 320-333 (DRALYHKNGTSNHR). Residues 334-354 (AGAVMIVFSCLFIFSFSQTWA) form a helical membrane-spanning segment. At 355–374 (PAAYVIVGESYPVRYRSKCA) the chain is on the extracellular side. The chain crosses the membrane as a helical span at residues 375–395 (AVATSANWFWNFLISFFTPFI). Over 396-402 (TNSIGFK) the chain is Cytoplasmic. The helical transmembrane segment at 403–423 (YGYIFASCNLTGAAIIFLFVH) threads the bilayer. Topologically, residues 424 to 518 (ETKGRTLEEI…IRPDKREPRL (95 aa)) are extracellular. The span at 477-506 (IENTDNQGDSGSFQTSTPDDSRPEQNQASA) shows a compositional bias: polar residues. A disordered region spans residues 477 to 518 (IENTDNQGDSGSFQTSTPDDSRPEQNQASATYIRPDKREPRL).

Belongs to the major facilitator superfamily. Sugar transporter (TC 2.A.1.1) family.

The protein localises to the membrane. This chain is Probable high-affinity hexose transporter ght7 (ght7), found in Schizosaccharomyces pombe (strain 972 / ATCC 24843) (Fission yeast).